Here is a 178-residue protein sequence, read N- to C-terminus: Transcription factor E (178 aa).

Positions 3-86 constitute an HTH TFE/IIEalpha-type domain; sequence AHEALAEIAG…YWRITDEPIQ (84 aa).

This sequence belongs to the TFE family. Monomer. Interaction with RNA polymerase subunits RpoF and RpoE is necessary for Tfe stimulatory transcription activity. Able to interact with Tbp and RNA polymerase in the absence of DNA promoter. Interacts both with the preinitiation and elongation complexes.

Functionally, transcription factor that plays a role in the activation of archaeal genes transcribed by RNA polymerase. Facilitates transcription initiation by enhancing TATA-box recognition by TATA-box-binding protein (Tbp), and transcription factor B (Tfb) and RNA polymerase recruitment. Not absolutely required for transcription in vitro, but particularly important in cases where Tbp or Tfb function is not optimal. It dynamically alters the nucleic acid-binding properties of RNA polymerases by stabilizing the initiation complex and destabilizing elongation complexes. Seems to translocate with the RNA polymerase following initiation and acts by binding to the non template strand of the transcription bubble in elongation complexes. This is Transcription factor E from Thermofilum pendens (strain DSM 2475 / Hrk 5).